A 325-amino-acid polypeptide reads, in one-letter code: 2-oxoglutarate-dependent dioxygenase tropC (325 aa).

One can recognise a Fe2OG dioxygenase domain in the interval 185–287 (PSIPMRLLHY…RYSVAFFLNG (103 aa)). His210, Asp212, and His269 together coordinate Fe cation. Arg278 contacts 2-oxoglutarate.

Belongs to the iron/ascorbate-dependent oxidoreductase family. It depends on Fe(2+) as a cofactor.

It participates in secondary metabolite biosynthesis. Functionally, 2-oxoglutarate-dependent dioxygenase; part of the gene cluster that mediates the biosynthesis of the tropolone class of fungal maleic anhydrides. The pathway begins with the synthesis of 3-methylorcinaldehyde by the non-reducing polyketide synthase (PKS) tropA. 3-methylorcinaldehyde is the substrate for the FAD-dependent monooxygenase tropB to yield a dearomatized hydroxycyclohexadione. The 2-oxoglutarate-dependent dioxygenase tropC then performs the oxidative ring expansion to provide the first tropolone metabolite stipitaldehyde. Trop D converts stipitaldehyde into stipitacetal which is in turn converted to stipitalide by the short-chain dehydrogenase/reductase tropE. The next steps involve tropF, tropG, tropH, tropI and tropJ to form successive tropolone maleic anhydrides including stipitaldehydic, stipitatonic and stipitatic acids. This chain is 2-oxoglutarate-dependent dioxygenase tropC, found in Talaromyces stipitatus (strain ATCC 10500 / CBS 375.48 / QM 6759 / NRRL 1006) (Penicillium stipitatum).